The following is a 569-amino-acid chain: Endo-1,4-beta-xylanase 5 (569 aa).

Residues 1-25 (MKNINNGFFLCMLLLLWCFVHSGIS) form the signal peptide. Asn-197, Asn-261, and Asn-307 each carry an N-linked (GlcNAc...) asparagine glycan. The GH10 domain occupies 209–500 (EQTKPSFLLG…NTATGDVIDK (292 aa)). Residue Glu-332 is the Proton donor of the active site. A glycan (N-linked (GlcNAc...) asparagine) is linked at Asn-346. Catalysis depends on Glu-439, which acts as the Nucleophile. Residues Asn-490, Asn-536, and Asn-544 are each glycosylated (N-linked (GlcNAc...) asparagine).

The protein belongs to the glycosyl hydrolase 10 (cellulase F) family.

It catalyses the reaction Endohydrolysis of (1-&gt;4)-beta-D-xylosidic linkages in xylans.. The protein operates within glycan degradation; xylan degradation. Binds to and hydrolyzes insoluble and soluble xylan substrates. The polypeptide is Endo-1,4-beta-xylanase 5 (Arabidopsis thaliana (Mouse-ear cress)).